The chain runs to 228 residues: Ankyrin repeat domain-containing protein 46 (228 aa).

ANK repeat units lie at residues 11–40 (QTNVPLLQACIDGDFTYSKRLLESGFDPNI), 44–74 (RGRTGLHLAAARGNVDICQLLHKFGADPLAT), 77–103 (QGNTALHLCGHVDTIQFLVSNGLKIDI), and 107–138 (QGATPLVLAKRRGVNKDVIRLLESLEEQEVKG). A helical membrane pass occupies residues 195-215 (VLLLILVIALLSLGIAYYVSG).

The protein resides in the membrane. The protein is Ankyrin repeat domain-containing protein 46 (Ankrd46) of Mus musculus (Mouse).